The chain runs to 663 residues: Transmembrane 9 superfamily member 2 (663 aa).

Residues 1-28 (MSARLPVLSPPRWPRLLLLSLLLLGAVP) form the signal peptide. Residues 29–300 (GPRRSGGFYL…LESMPHTHIQ (272 aa)) are Lumenal-facing. The chain crosses the membrane as a helical span at residues 301–321 (WFSIMNSLVIVLFLSGMVAMI). Residues 322 to 374 (MLRTLHKDIARYNQMDSTEDAQEEFGWKLVHGDIFRPPRKGMLLSVFLGSGTQ) lie on the Cytoplasmic side of the membrane. A helical transmembrane segment spans residues 375–395 (ILIMTFVTLFFACLGFLSPAN). The Lumenal portion of the chain corresponds to 396 to 398 (RGA). A helical membrane pass occupies residues 399–419 (LMTCAVVLWVLLGTPAGYVAA). Topologically, residues 420–437 (RFYKSFGGEKWKTNVLLT) are cytoplasmic. Residues 438–458 (SFLCPGIVFADFFIMNLILWG) traverse the membrane as a helical segment. The Lumenal portion of the chain corresponds to 459–466 (EGSSAAIP). The chain crosses the membrane as a helical span at residues 467 to 487 (FGTLVAILALWFCISVPLTFI). Over 488-522 (GAYFGFKKNAIEHPVRTNQIPRQIPEQSFYTKPLP) the chain is Cytoplasmic. The chain crosses the membrane as a helical span at residues 523 to 543 (GIIMGGILPFGCIFIQLFFIL). Residues 544-554 (NSIWSHQMYYM) are Lumenal-facing. A helical transmembrane segment spans residues 555 to 575 (FGFLFLVFIILVITCSEATIL). The Cytoplasmic segment spans residues 576–591 (LCYFHLCAEDYHWQWR). Residues 592–612 (SFLTSGFTAVYFLIYAVHYFF) traverse the membrane as a helical segment. Over 613–631 (SKLQITGTASTILYFGYTM) the chain is Lumenal. A helical membrane pass occupies residues 632–652 (IMVLIFFLFTGTIGFFACFWF). Over 653-663 (VTKIYSVVKVD) the chain is Cytoplasmic.

Belongs to the nonaspanin (TM9SF) (TC 9.A.2) family.

The protein resides in the endosome membrane. Its subcellular location is the golgi outpost. It is found in the cytoplasm. It localises to the cytoskeleton. The protein localises to the microtubule organizing center. Functionally, in the intracellular compartments, may function as a channel or small molecule transporter. The polypeptide is Transmembrane 9 superfamily member 2 (TM9SF2) (Pongo abelii (Sumatran orangutan)).